The following is a 334-amino-acid chain: MGSIGSMGKPIEGFLVAAIQFPVPIVNSRKDIDHNIESIIRTLHATKAGYPGVELIIFPEYSTQGLNTAKWLSEEFLLDVPGKETELYAKACKEAKVYGVFSIMERNPDSNKNPYNTAIIIDPQGEIILKYRKLFPWNPIEPWYPGDLGMPVCEGPGGSKLAVCICHDGMIPELAREAAYKGCNVYIRISGYSTQVNDQWILTNRSNAWHNLMYTVSVNLAGYDNVFYYFGEGQICNFDGTTLVQGHRNPWEIVTGEIYPKMADNARLSWGLENNIYNLGHRGYVAKPGGEHDAGLTYIKDLAAGKYKLPWEDHMKIKDGSIYGYPTTGGRFGK.

The CN hydrolase domain occupies 14-260 (FLVAAIQFPV…WEIVTGEIYP (247 aa)). Glu-60 functions as the Proton acceptor in the catalytic mechanism. The Proton donor role is filled by Lys-133. The active-site Nucleophile is the Cys-166.

This sequence belongs to the carbon-nitrogen hydrolase superfamily. Aliphatic amidase family. In terms of assembly, homotetramer.

It catalyses the reaction formamide + H2O = formate + NH4(+). Inhibited by iodoacetate. Appears to be regulated by the fur protein, but this effect is not mediated at the transcriptional level. Functionally, is an aliphatic amidase with a restricted substrate specificity, as it only hydrolyzes formamide. Probably involved in the nitrogen metabolism of H.pylori. This chain is Formamidase (amiF), found in Helicobacter pylori (strain ATCC 700392 / 26695) (Campylobacter pylori).